Consider the following 479-residue polypeptide: Ribosomal RNA small subunit methyltransferase F (479 aa).

S-adenosyl-L-methionine is bound by residues 125–131 (AAAPGSK), Glu149, Asp176, and Asp194. The active-site Nucleophile is Cys247.

The protein belongs to the class I-like SAM-binding methyltransferase superfamily. RsmB/NOP family.

It localises to the cytoplasm. The enzyme catalyses cytidine(1407) in 16S rRNA + S-adenosyl-L-methionine = 5-methylcytidine(1407) in 16S rRNA + S-adenosyl-L-homocysteine + H(+). Specifically methylates the cytosine at position 1407 (m5C1407) of 16S rRNA. This is Ribosomal RNA small subunit methyltransferase F from Shigella dysenteriae serotype 1 (strain Sd197).